Consider the following 75-residue polypeptide: MAFLKKSLFLVLFLGLVSLSMCEEEKRENEVEEEQEDDEQSELRRSLWSSIKDMAAAAGRAALNAVNGILNPGEQ.

The signal sequence occupies residues 1 to 22 (MAFLKKSLFLVLFLGLVSLSMC). A propeptide spanning residues 23–45 (EEEKRENEVEEEQEDDEQSELRR) is cleaved from the precursor. The residue at position 72 (Pro-72) is a Proline amide. A propeptide spanning residues 74–75 (EQ) is cleaved from the precursor.

This sequence belongs to the frog skin active peptide (FSAP) family. Dermaseptin subfamily. Expressed by the skin glands.

It localises to the secreted. It is found in the target cell membrane. Its function is as follows. Antimicrobial peptide with activity against Gram-positive and Gram-negative bacteria and fungi. Has been tested against E.coli (MIC=47.25-128 uM), S.aureus (MIC=189-512 uM), K.pneumoniae (MIC=189 uM) and C.albicans (MIC&gt;189 uM). Probably acts by disturbing membrane functions with its alpha-helical amphipathic structure. May penetrate bacterial membranes, but stay at the mammalian membrane surface. Shows a weak hemolytic activity. This chain is Dermaseptin-SP4, found in Agalychnis spurrelli (Gliding leaf frog).